The primary structure comprises 476 residues: Small ribosomal subunit protein mS29 (476 aa).

The N-terminal 54 residues, 1 to 54, are a transit peptide targeting the mitochondrion; that stretch reads MLPKFRSRSSIIKNTERISNILSGGKLTVCGSKLGGLYTFEKCTFNKYYSSSQY. Residues 58-97 are disordered; the sequence is GRPVGGNIHSSSNQQRQKNSEAPRINEIPPSTSSVEKSTT. Polar residues-rich tracts occupy residues 65 to 74 and 86 to 97; these read IHSSSNQQRQ and PPSTSSVEKSTT. 200-207 contacts ATP; it reads GAPGSGRS.

Belongs to the mitochondrion-specific ribosomal protein mS29 family. As to quaternary structure, component of the mitochondrial small ribosomal subunit (mt-SSU). Mature yeast 74S mitochondrial ribosomes consist of a small (37S) and a large (54S) subunit. The 37S small subunit contains a 15S ribosomal RNA (15S mt-rRNA) and at least 32 different proteins. The 54S large subunit contains a 21S rRNA (21S mt-rRNA) and at least 45 different proteins.

The protein localises to the mitochondrion. Functionally, component of the mitochondrial ribosome (mitoribosome), a dedicated translation machinery responsible for the synthesis of mitochondrial genome-encoded proteins, including at least some of the essential transmembrane subunits of the mitochondrial respiratory chain. The mitoribosomes are attached to the mitochondrial inner membrane and translation products are cotranslationally integrated into the membrane. mS29 binds GTP and is probably an active GTPase. GTP hydrolysis may be linked to subunit association. mS29 also has an extraribosomal function, being required for maintenance of mitochondrial DNA. The protein is Small ribosomal subunit protein mS29 (rsm23) of Schizosaccharomyces pombe (strain 972 / ATCC 24843) (Fission yeast).